A 174-amino-acid chain; its full sequence is MAQDIKNEEVEEVQEEEVVETAEETTPEKSELDLANERADEFENKYLRAHAEMQNIQRRANEERQNLQRYRSQDLAKAILPSLDNLERALAVEGLTDDVKKGLAMVQESLIHALKEEGIEEIAADGEFDHNYHMAIQTLPGDDEHPVDTIAQVFQKGYKLHDRILRPAMVVVYN.

The interval 1–35 (MAQDIKNEEVEEVQEEEVVETAEETTPEKSELDLA) is disordered. Residues 9–25 (EVEEVQEEEVVETAEET) show a composition bias toward acidic residues. A compositionally biased stretch (basic and acidic residues) spans 26–35 (TPEKSELDLA).

It belongs to the GrpE family. As to quaternary structure, homodimer.

It is found in the cytoplasm. Its function is as follows. Participates actively in the response to hyperosmotic and heat shock by preventing the aggregation of stress-denatured proteins, in association with DnaK and GrpE. It is the nucleotide exchange factor for DnaK and may function as a thermosensor. Unfolded proteins bind initially to DnaJ; upon interaction with the DnaJ-bound protein, DnaK hydrolyzes its bound ATP, resulting in the formation of a stable complex. GrpE releases ADP from DnaK; ATP binding to DnaK triggers the release of the substrate protein, thus completing the reaction cycle. Several rounds of ATP-dependent interactions between DnaJ, DnaK and GrpE are required for fully efficient folding. This Streptococcus pneumoniae (strain ATCC BAA-255 / R6) protein is Protein GrpE.